A 217-amino-acid polypeptide reads, in one-letter code: Homologous-pairing protein 2 homolog (217 aa).

Positions 84 to 152 (ADLHGLDASI…RLKNIKAATN (69 aa)) form a coiled coil. The interval 118–182 (TSALTTPEMQ…WRKRKRMTTE (65 aa)) is DNA-binding.

This sequence belongs to the HOP2 family. As to quaternary structure, interacts with the DNA-binding domain of the nuclear receptors NR3C1/GR, ESR2/ER-beta, THRB and RXRA. Forms a stable heterodimer with MND1. Interacts with PSMC3/TBP1. Phosphorylated by PKA, PKC and MAPK. Highly expressed in testis and more specifically in spermatocytes. Detected in spleen, ovary and thymus.

It localises to the nucleus. Functionally, plays an important role in meiotic recombination. Stimulates DMC1-mediated strand exchange required for pairing homologous chromosomes during meiosis. The complex PSMC3IP/MND1 binds DNA, stimulates the recombinase activity of DMC1 as well as DMC1 D-loop formation from double-strand DNA. This complex stabilizes presynaptic RAD51 and DMC1 filaments formed on single strand DNA to capture double-strand DNA. This complex stimulates both synaptic and presynaptic critical steps in RAD51 and DMC1-promoted homologous pairing. May inhibit HIV-1 viral protein TAT activity and modulate the activity of proteasomes through association with PSMC3. This is Homologous-pairing protein 2 homolog (Psmc3ip) from Mus musculus (Mouse).